A 296-amino-acid chain; its full sequence is Pyridoxine/pyridoxal/pyridoxamine kinase (296 aa).

Substrate-binding residues include serine 23 and histidine 59. Aspartate 125 lines the ATP pocket. Residue tyrosine 136 participates in Mg(2+) binding. Residues threonine 157, glutamate 162, threonine 195, 222–225 (HQRV), and threonine 232 each bind ATP. Mg(2+) is bound at residue glutamate 162. Position 234 (aspartate 234) interacts with substrate.

It belongs to the pyridoxine kinase family. PdxK subfamily. In terms of assembly, homodimer. The cofactor is Mg(2+).

The catalysed reaction is pyridoxal + ATP = pyridoxal 5'-phosphate + ADP + H(+). It carries out the reaction pyridoxine + ATP = pyridoxine 5'-phosphate + ADP + H(+). The enzyme catalyses pyridoxamine + ATP = pyridoxamine 5'-phosphate + ADP + H(+). The protein operates within cofactor metabolism; pyridoxal 5'-phosphate salvage; pyridoxal 5'-phosphate from pyridoxal: step 1/1. Its pathway is cofactor metabolism; pyridoxal 5'-phosphate salvage; pyridoxine 5'-phosphate from pyridoxine: step 1/1. It functions in the pathway cofactor metabolism; pyridoxal 5'-phosphate salvage; pyridoxamine 5'-phosphate from pyridoxamine: step 1/1. In terms of biological role, B6-vitamer kinase involved in the salvage pathway of pyridoxal 5'-phosphate (PLP). Catalyzes the phosphorylation of pyridoxine (PN), pyridoxal (PL), and pyridoxamine (PM), forming their respective 5'-phosphorylated esters, i.e. PNP, PLP and PMP. The sequence is that of Pyridoxine/pyridoxal/pyridoxamine kinase from Bordetella avium (strain 197N).